The sequence spans 409 residues: Mitochondrial inner membrane protein oxa1-2 (409 aa).

Residues 76–96 (VVYTPSLPLSSSVLASFSFLP) form a helical membrane-spanning segment. Topologically, residues 97-114 (HNILQNGLNTLHIWSGLP) are mitochondrial intermembrane. Residues 115-135 (WWASIAACAVAMRIAVFPIML) form a helical membrane-spanning segment. The Mitochondrial matrix segment spans residues 136-188 (KMMKTSAKLAIINPKVAEHMSVLSKAKAEGNSELMMQATTQIQNLYKVNNVNP). A helical transmembrane segment spans residues 189–209 (LNLLSAPVFQGILFISFFYAL). The Mitochondrial intermembrane segment spans residues 210–235 (KTMAGVPVEGFTDGGFWWVNDLSQPD). A helical membrane pass occupies residues 236 to 256 (PLHIFPVANGLLMLLNIELGS). Residues 257-275 (ETGSNKVAMSPSMKKFFRF) lie on the Mitochondrial matrix side of the membrane. The chain crosses the membrane as a helical span at residues 276 to 296 (LCLASPLFTMNFPMAIFMYWF). At 297–409 (PSNVFSVFQG…SVTKPTEKKD (113 aa)) the chain is on the mitochondrial intermembrane side. Positions 369-409 (TDTNNEQKPTNNSTITKATTLSDNSQNDKSSSVTKPTEKKD) are disordered. The span at 374–403 (EQKPTNNSTITKATTLSDNSQNDKSSSVTK) shows a compositional bias: polar residues.

It belongs to the OXA1/ALB3/YidC family.

It localises to the mitochondrion inner membrane. Required for the insertion of integral membrane proteins into the mitochondrial inner membrane. Essential for the activity and assembly of cytochrome c oxidase. It is essential for viability while oxa101 is not. When both are deleted the cell is non-viable, suggesting that oxa101 act as a back-up for oxa102. This chain is Mitochondrial inner membrane protein oxa1-2 (oxa102), found in Schizosaccharomyces pombe (strain 972 / ATCC 24843) (Fission yeast).